A 666-amino-acid polypeptide reads, in one-letter code: DNA mismatch repair protein MutL (666 aa).

It belongs to the DNA mismatch repair MutL/HexB family.

This protein is involved in the repair of mismatches in DNA. It is required for dam-dependent methyl-directed DNA mismatch repair. May act as a 'molecular matchmaker', a protein that promotes the formation of a stable complex between two or more DNA-binding proteins in an ATP-dependent manner without itself being part of a final effector complex. The protein is DNA mismatch repair protein MutL of Clostridium botulinum (strain ATCC 19397 / Type A).